The primary structure comprises 513 residues: GMP synthase [glutamine-hydrolyzing] (513 aa).

In terms of domain architecture, Glutamine amidotransferase type-1 spans 3 to 200 (SVLVLDFGSQ…LLNIAGITPD (198 aa)). C80 functions as the Nucleophile in the catalytic mechanism. Active-site residues include H174 and E176. Residues 201-388 (WSSKSFIDHQ…LGIAEDILMR (188 aa)) form the GMPS ATP-PPase domain. 228-234 (SGGVDST) is an ATP binding site.

As to quaternary structure, homodimer.

It carries out the reaction XMP + L-glutamine + ATP + H2O = GMP + L-glutamate + AMP + diphosphate + 2 H(+). The protein operates within purine metabolism; GMP biosynthesis; GMP from XMP (L-Gln route): step 1/1. Its function is as follows. Catalyzes the synthesis of GMP from XMP. This is GMP synthase [glutamine-hydrolyzing] from Chlorobium phaeovibrioides (strain DSM 265 / 1930) (Prosthecochloris vibrioformis (strain DSM 265)).